The following is a 397-amino-acid chain: MSTADATGGLTEEEENILWERSVIAWKQQKEERKKSNQELIDRGEKPIDYDNDWKDLPIFMQELPEEPSSNQYLAAFQSLSNDCTPEERAETFKNLGNDYFREGKSRFNDALYYYNKALSVKCNDMTKNSIYLSNRAAINMELGNYGLVIKDCTVSVEFNPLNMKAYSRMARAQLQLSKYQDSIKTCDLGLSHEPTNKDLSTIRENANKKLQDIKKREQDKIDKENQLKQQQQLLATKLYEKNKYKLGHQIFDMSQYTYQSDRKVTIDQNNDVHFPVVFLYPEFGKSDFIMDFQEDHTFGDHLQMMFPPENPEFAPWDTKKEYTMDRIEVYFETNWTKPILSDIKIKEIEKKWIRVKHTTDIAKVISHPTYIIPEIPIFYIVSRGNLFYKKFLENKL.

TPR repeat units lie at residues 90–125 (AETF…KCND), 130–163 (SIYL…NPLN), and 164–197 (MKAY…EPTN).

This sequence belongs to the TTC4 family.

The chain is Tetratricopeptide repeat protein 4 homolog (ttc4) from Dictyostelium discoideum (Social amoeba).